A 343-amino-acid polypeptide reads, in one-letter code: S-adenosylmethionine:tRNA ribosyltransferase-isomerase (343 aa).

This sequence belongs to the QueA family. Monomer.

The protein resides in the cytoplasm. The catalysed reaction is 7-aminomethyl-7-carbaguanosine(34) in tRNA + S-adenosyl-L-methionine = epoxyqueuosine(34) in tRNA + adenine + L-methionine + 2 H(+). Its pathway is tRNA modification; tRNA-queuosine biosynthesis. In terms of biological role, transfers and isomerizes the ribose moiety from AdoMet to the 7-aminomethyl group of 7-deazaguanine (preQ1-tRNA) to give epoxyqueuosine (oQ-tRNA). The protein is S-adenosylmethionine:tRNA ribosyltransferase-isomerase of Natranaerobius thermophilus (strain ATCC BAA-1301 / DSM 18059 / JW/NM-WN-LF).